The primary structure comprises 143 residues: Putative pre-16S rRNA nuclease (143 aa).

Belongs to the YqgF nuclease family.

Its subcellular location is the cytoplasm. Its function is as follows. Could be a nuclease involved in processing of the 5'-end of pre-16S rRNA. This chain is Putative pre-16S rRNA nuclease, found in Ralstonia pickettii (strain 12J).